Here is an 83-residue protein sequence, read N- to C-terminus: Sulfur carrier protein TusA (83 aa).

Catalysis depends on Cys-19, which acts as the Cysteine persulfide intermediate.

The protein belongs to the sulfur carrier protein TusA family.

The protein resides in the cytoplasm. Functionally, sulfur carrier protein which probably makes part of a sulfur-relay system. The sequence is that of Sulfur carrier protein TusA from Aliivibrio fischeri (strain ATCC 700601 / ES114) (Vibrio fischeri).